The primary structure comprises 646 residues: Long-chain fatty acid transport protein 1 (646 aa).

At 1–13 the chain is on the extracellular side; it reads MRTPGAGTASVAS. The chain crosses the membrane as a helical span at residues 14–34; it reads LGLLWLLGLPWTWSAAAAFGV. Over 35-646 the chain is Cytoplasmic; that stretch reads YVGSGGWRFL…ARICAGDFSL (612 aa). Residues 191-475 are sufficient for oligomerization; sequence EVSEQLGKSL…YVSDSATNKK (285 aa). 246-257 lines the AMP pocket; the sequence is YIYTSGTTGLPK.

It belongs to the ATP-dependent AMP-binding enzyme family. As to quaternary structure, self-associates. May function as a homodimer. Interacts with EPRS1; mediates the translocation of SLC27A1 from the cytoplasm to the plasma membrane thereby increasing the uptake of long-chain fatty acids. Interacts with DGAT2 and this interaction is enhanced in the presence of ZFYVE1. As to expression, expressed in muscle.

It localises to the cell membrane. It is found in the endomembrane system. The protein localises to the cytoplasm. It catalyses the reaction a fatty acid(in) = a fatty acid(out). The enzyme catalyses (9Z)-octadecenoate(out) = (9Z)-octadecenoate(in). The catalysed reaction is hexadecanoate(out) = hexadecanoate(in). It carries out the reaction (5Z,8Z,11Z,14Z)-eicosatetraenoate(out) = (5Z,8Z,11Z,14Z)-eicosatetraenoate(in). It catalyses the reaction (9Z,12Z)-octadecadienoate(out) = (9Z,12Z)-octadecadienoate(in). The enzyme catalyses a long-chain fatty acid + ATP + CoA = a long-chain fatty acyl-CoA + AMP + diphosphate. The catalysed reaction is (5Z,8Z,11Z,14Z)-eicosatetraenoate + ATP + CoA = (5Z,8Z,11Z,14Z)-eicosatetraenoyl-CoA + AMP + diphosphate. It carries out the reaction a very long-chain fatty acid + ATP + CoA = a very long-chain fatty acyl-CoA + AMP + diphosphate. It catalyses the reaction tetracosanoate + ATP + CoA = tetracosanoyl-CoA + AMP + diphosphate. Its activity is regulated as follows. Inhibited by Triacsin C. Its function is as follows. Mediates the import of long-chain fatty acids (LCFA) into the cell by facilitating their transport at the plasma membrane. Also functions as an acyl-CoA ligase catalyzing the ATP-dependent formation of fatty acyl-CoA using LCFA and very-long-chain fatty acids (VLCFA) as substrates, which prevents fatty acid efflux from cells and might drive more fatty acid uptake. May act directly as a bona fide transporter, or alternatively, in a cytoplasmic or membrane-associated multimeric protein complex to trap and draw fatty acids towards accumulation. Plays a pivotal role in regulating available LCFA substrates from exogenous sources in tissues undergoing high levels of beta-oxidation or triglyceride synthesis. May be involved in regulation of cholesterol metabolism. Probably involved in fatty acid transport across the blood barrier. This is Long-chain fatty acid transport protein 1 from Rattus norvegicus (Rat).